A 375-amino-acid chain; its full sequence is Lipid-A-disaccharide synthase (375 aa).

This sequence belongs to the LpxB family.

It catalyses the reaction a lipid X + a UDP-2-N,3-O-bis[(3R)-3-hydroxyacyl]-alpha-D-glucosamine = a lipid A disaccharide + UDP + H(+). Its pathway is bacterial outer membrane biogenesis; LPS lipid A biosynthesis. In terms of biological role, condensation of UDP-2,3-diacylglucosamine and 2,3-diacylglucosamine-1-phosphate to form lipid A disaccharide, a precursor of lipid A, a phosphorylated glycolipid that anchors the lipopolysaccharide to the outer membrane of the cell. The chain is Lipid-A-disaccharide synthase from Pseudomonas putida (strain W619).